We begin with the raw amino-acid sequence, 693 residues long: Elongation factor G (693 aa).

The 275-residue stretch at 8-282 (EKTRNIGIMA…AVLDYLPSPL (275 aa)) folds into the tr-type G domain. GTP is bound by residues 17 to 24 (AHVDAGKT), 81 to 85 (DTPGH), and 135 to 138 (NKMD).

This sequence belongs to the TRAFAC class translation factor GTPase superfamily. Classic translation factor GTPase family. EF-G/EF-2 subfamily.

It localises to the cytoplasm. Functionally, catalyzes the GTP-dependent ribosomal translocation step during translation elongation. During this step, the ribosome changes from the pre-translocational (PRE) to the post-translocational (POST) state as the newly formed A-site-bound peptidyl-tRNA and P-site-bound deacylated tRNA move to the P and E sites, respectively. Catalyzes the coordinated movement of the two tRNA molecules, the mRNA and conformational changes in the ribosome. In Enterococcus faecalis (strain ATCC 700802 / V583), this protein is Elongation factor G.